A 53-amino-acid polypeptide reads, in one-letter code: UPF0391 membrane protein Bcen2424_6479 (53 aa).

2 consecutive transmembrane segments (helical) span residues 5–25 (AIIFFIIAIIAAVFGFGGIAA) and 30–50 (IAKILFYIFVVIFLVTLLLGV).

It belongs to the UPF0391 family.

Its subcellular location is the cell membrane. The protein is UPF0391 membrane protein Bcen2424_6479 of Burkholderia cenocepacia (strain HI2424).